Consider the following 352-residue polypeptide: Outer membrane protein assembly factor BamC (352 aa).

The first 19 residues, 1-19, serve as a signal peptide directing secretion; sequence MQYWIPKALAVSVLVSLSG. Cys20 carries the N-palmitoyl cysteine lipid modification. Cys20 carries the S-diacylglycerol cysteine lipid modification.

Belongs to the BamC family. As to quaternary structure, part of the Bam complex.

Its subcellular location is the cell outer membrane. In terms of biological role, part of the outer membrane protein assembly complex, which is involved in assembly and insertion of beta-barrel proteins into the outer membrane. In Pseudoalteromonas sp. (strain SM9913), this protein is Outer membrane protein assembly factor BamC.